The chain runs to 192 residues: Ion-translocating oxidoreductase complex subunit A (192 aa).

Helical transmembrane passes span 5-25 (ILLIIGTALINNFVLVKFLGL), 39-59 (VGMGLATMFVLTVASLCAYLV), 63-83 (ILIPLNATFLRTLVFILVIAV), 102-122 (LLGIFLPLITTNCAVLGVALL), 134-154 (VVYGFGASLGFSLVLVLFAAL), and 171-191 (SIALITAGLMSLAFMGFTGLV).

It belongs to the NqrDE/RnfAE family. As to quaternary structure, the complex is composed of six subunits: RnfA, RnfB, RnfC, RnfD, RnfE and RnfG.

It localises to the cell inner membrane. Part of a membrane-bound complex that couples electron transfer with translocation of ions across the membrane. The chain is Ion-translocating oxidoreductase complex subunit A from Haemophilus influenzae (strain ATCC 51907 / DSM 11121 / KW20 / Rd).